A 297-amino-acid polypeptide reads, in one-letter code: Probable endonuclease 4 (297 aa).

Residues histidine 69, histidine 110, glutamate 145, aspartate 179, histidine 182, histidine 214, aspartate 227, histidine 229, and glutamate 259 each contribute to the Zn(2+) site.

The protein belongs to the AP endonuclease 2 family. Zn(2+) serves as cofactor.

It catalyses the reaction Endonucleolytic cleavage to 5'-phosphooligonucleotide end-products.. Endonuclease IV plays a role in DNA repair. It cleaves phosphodiester bonds at apurinic or apyrimidinic (AP) sites, generating a 3'-hydroxyl group and a 5'-terminal sugar phosphate. This Listeria monocytogenes serotype 4b (strain F2365) protein is Probable endonuclease 4.